The primary structure comprises 491 residues: Aspartyl/glutamyl-tRNA(Asn/Gln) amidotransferase subunit B (491 aa).

The protein belongs to the GatB/GatE family. GatB subfamily. As to quaternary structure, heterotrimer of A, B and C subunits.

It catalyses the reaction L-glutamyl-tRNA(Gln) + L-glutamine + ATP + H2O = L-glutaminyl-tRNA(Gln) + L-glutamate + ADP + phosphate + H(+). The catalysed reaction is L-aspartyl-tRNA(Asn) + L-glutamine + ATP + H2O = L-asparaginyl-tRNA(Asn) + L-glutamate + ADP + phosphate + 2 H(+). Its function is as follows. Allows the formation of correctly charged Asn-tRNA(Asn) or Gln-tRNA(Gln) through the transamidation of misacylated Asp-tRNA(Asn) or Glu-tRNA(Gln) in organisms which lack either or both of asparaginyl-tRNA or glutaminyl-tRNA synthetases. The reaction takes place in the presence of glutamine and ATP through an activated phospho-Asp-tRNA(Asn) or phospho-Glu-tRNA(Gln). The protein is Aspartyl/glutamyl-tRNA(Asn/Gln) amidotransferase subunit B of Prochlorococcus marinus (strain NATL1A).